Reading from the N-terminus, the 275-residue chain is MALVKVKPTSAGRRGMVKVVSPNLHKGAPHAALLEKKIRGSGRNNNGHITIRHRGGGHKQHYRVVDFRRNKDGIPAKVERLEYDPNRTAHIALLCYADGERRYIIAPRGLEVGATLISGIEAPIRAGNTLPIRNIPVGTTIHCIEMIPGKGAQMARSAGASAVLMAREGTYAQVRLRSGEVRRVHIECRATIGEVGNEEHSLRQIGKAGAMRWRGIRPTVRGVAMNPIDHPHGGGEGRTGEAREPVSPWGTPSKGYKTRRNKRTNNMIVQRRKRK.

Residues 223 to 275 (VAMNPIDHPHGGGEGRTGEAREPVSPWGTPSKGYKTRRNKRTNNMIVQRRKRK) form a disordered region. A compositionally biased stretch (basic and acidic residues) spans 229 to 244 (DHPHGGGEGRTGEARE).

This sequence belongs to the universal ribosomal protein uL2 family. In terms of assembly, part of the 50S ribosomal subunit. Forms a bridge to the 30S subunit in the 70S ribosome.

Functionally, one of the primary rRNA binding proteins. Required for association of the 30S and 50S subunits to form the 70S ribosome, for tRNA binding and peptide bond formation. It has been suggested to have peptidyltransferase activity; this is somewhat controversial. Makes several contacts with the 16S rRNA in the 70S ribosome. This Bordetella avium (strain 197N) protein is Large ribosomal subunit protein uL2.